The primary structure comprises 868 residues: DNA topoisomerase 1 (868 aa).

A Toprim domain is found at 3-148 (KSLVIVESPA…RFSRVVFNEI (146 aa)). Residues Glu9 and Asp117 each contribute to the Mg(2+) site. The 418-residue stretch at 164–581 (NMDRVNAQQT…QFFKDFSSQL (418 aa)) folds into the Topo IA-type catalytic domain. Residues 198–203 (SAGRVQ) are interaction with DNA. Tyr325 serves as the catalytic O-(5'-phospho-DNA)-tyrosine intermediate. 3 C4-type zinc fingers span residues 605–636 (CPTC…KERC), 667–694 (CTKC…NPNC), and 716–739 (CDKC…CTNC).

This sequence belongs to the type IA topoisomerase family. Monomer. Mg(2+) serves as cofactor.

The enzyme catalyses ATP-independent breakage of single-stranded DNA, followed by passage and rejoining.. Its function is as follows. Releases the supercoiling and torsional tension of DNA, which is introduced during the DNA replication and transcription, by transiently cleaving and rejoining one strand of the DNA duplex. Introduces a single-strand break via transesterification at a target site in duplex DNA. The scissile phosphodiester is attacked by the catalytic tyrosine of the enzyme, resulting in the formation of a DNA-(5'-phosphotyrosyl)-enzyme intermediate and the expulsion of a 3'-OH DNA strand. The free DNA strand then undergoes passage around the unbroken strand, thus removing DNA supercoils. Finally, in the religation step, the DNA 3'-OH attacks the covalent intermediate to expel the active-site tyrosine and restore the DNA phosphodiester backbone. The sequence is that of DNA topoisomerase 1 from Haemophilus influenzae (strain ATCC 51907 / DSM 11121 / KW20 / Rd).